A 153-amino-acid polypeptide reads, in one-letter code: Probable phospholipase A2 homolog 2 (153 aa).

The signal sequence occupies residues 1 to 25 (MRFFLKLAPRCSVLLLLLLVTASRG). 6 disulfide bridges follow: Cys42–Cys70, Cys46–Cys76, Cys51–Cys123, Cys63–Cys83, Cys82–Cys109, and Cys89–Cys102. Tyr62, Gly64, and Tyr67 together coordinate Ca(2+). Residue His86 is part of the active site. Asp87 is a Ca(2+) binding site.

This sequence belongs to the phospholipase A2 family. The cofactor is Ca(2+).

The protein localises to the secreted. It catalyses the reaction a 1,2-diacyl-sn-glycero-3-phosphocholine + H2O = a 1-acyl-sn-glycero-3-phosphocholine + a fatty acid + H(+). Functionally, PA2 catalyzes the calcium-dependent hydrolysis of the 2-acyl groups in 3-sn-phosphoglycerides. Releases lysophospholipids (LPLs) and free fatty acids (FFAs) from membrane phospholipids in response to hormones and other external stimuli. In Oryza sativa subsp. japonica (Rice), this protein is Probable phospholipase A2 homolog 2 (PLA2-II).